The sequence spans 544 residues: CTP synthase (544 aa).

The segment at 1–267 is amidoligase domain; it reads MAKFVFITGG…CREVLDVLDL (267 aa). Residue Ser-13 participates in CTP binding. Residue Ser-13 participates in UTP binding. Residues 14–19 and Asp-71 each bind ATP; that span reads SIGKGI. Mg(2+) is bound by residues Asp-71 and Glu-141. CTP contacts are provided by residues 148–150, 188–193, and Lys-224; these read DIE and KTKPTQ. UTP-binding positions include 188–193 and Lys-224; that span reads KTKPTQ. Residues 292–534 enclose the Glutamine amidotransferase type-1 domain; the sequence is KVALVGKYIQ…IEAAQQRLPS (243 aa). An L-glutamine-binding site is contributed by Gly-354. Cys-381 functions as the Nucleophile; for glutamine hydrolysis in the catalytic mechanism. L-glutamine-binding positions include 382 to 385, Glu-405, and Arg-462; that span reads LGMQ. Catalysis depends on residues His-507 and Glu-509.

The protein belongs to the CTP synthase family. As to quaternary structure, homotetramer.

The enzyme catalyses UTP + L-glutamine + ATP + H2O = CTP + L-glutamate + ADP + phosphate + 2 H(+). It catalyses the reaction L-glutamine + H2O = L-glutamate + NH4(+). It carries out the reaction UTP + NH4(+) + ATP = CTP + ADP + phosphate + 2 H(+). It functions in the pathway pyrimidine metabolism; CTP biosynthesis via de novo pathway; CTP from UDP: step 2/2. With respect to regulation, allosterically activated by GTP, when glutamine is the substrate; GTP has no effect on the reaction when ammonia is the substrate. The allosteric effector GTP functions by stabilizing the protein conformation that binds the tetrahedral intermediate(s) formed during glutamine hydrolysis. Inhibited by the product CTP, via allosteric rather than competitive inhibition. In terms of biological role, catalyzes the ATP-dependent amination of UTP to CTP with either L-glutamine or ammonia as the source of nitrogen. Regulates intracellular CTP levels through interactions with the four ribonucleotide triphosphates. The sequence is that of CTP synthase from Parasynechococcus marenigrum (strain WH8102).